We begin with the raw amino-acid sequence, 177 residues long: Large ribosomal subunit protein uL6 (177 aa).

It belongs to the universal ribosomal protein uL6 family. Part of the 50S ribosomal subunit.

Functionally, this protein binds to the 23S rRNA, and is important in its secondary structure. It is located near the subunit interface in the base of the L7/L12 stalk, and near the tRNA binding site of the peptidyltransferase center. This Methylobacillus flagellatus (strain ATCC 51484 / DSM 6875 / VKM B-1610 / KT) protein is Large ribosomal subunit protein uL6.